A 442-amino-acid polypeptide reads, in one-letter code: Vitellogenin-2 (442 aa).

The signal sequence occupies residues 1-19 (MNPLRTLCVMACLLAVAMG). A compositionally biased stretch (low complexity) spans 21 to 33 (PQSGNRSGRRSNS). The segment at 21–44 (PQSGNRSGRRSNSLDNVEQPSNWV) is disordered. Phosphoserine is present on residues Ser-31 and Ser-33. Polar residues predominate over residues 34 to 44 (LDNVEQPSNWV). Phosphoserine is present on Ser-82. Disordered regions lie at residues 165–200 (QPYE…QDDT) and 408–442 (KSPF…SRRQ). At Thr-170 the chain carries Phosphothreonine. Tyr-172 carries the post-translational modification Sulfotyrosine. Residues Ser-173, Ser-178, Ser-181, Ser-182, and Ser-183 each carry the phosphoserine modification. 2 stretches are compositionally biased toward low complexity: residues 175 to 186 (EEQSQRSSSEEQ) and 431 to 442 (RQSSSNQGSRRQ).

This sequence belongs to the AB hydrolase superfamily. Lipase family. Post-translationally, tyrosine sulfation occurs in the female only and plays an essential functional role. Synthesized in the fat body and ovarian follicle cells and accumulate in the oocyte.

Its subcellular location is the secreted. Vitellogenin is the major yolk protein of eggs where it is used as a food source during embryogenesis. Vitellogenins and their receptor yl/yolkless are required for maintenance of microtubule plus-end orientation towards the posterior pole of oocytes. Involved in polarized localization of germ plasm components, such as osk mRNA and vas protein, to the oocyte posterior cortex. Receptor-mediated endocytosis by yl/yolkless is crucial for actin reorganization, mediated by osk isoform A/Long, required to anchor germ plasm components to the oocyte cortex. The chain is Vitellogenin-2 (Yp2) from Drosophila melanogaster (Fruit fly).